The chain runs to 284 residues: 4-diphosphocytidyl-2-C-methyl-D-erythritol kinase (284 aa).

Lys-14 is an active-site residue. 98–108 (PMGGGLGGGSS) contacts ATP. Asp-140 is a catalytic residue.

The protein belongs to the GHMP kinase family. IspE subfamily.

The catalysed reaction is 4-CDP-2-C-methyl-D-erythritol + ATP = 4-CDP-2-C-methyl-D-erythritol 2-phosphate + ADP + H(+). It participates in isoprenoid biosynthesis; isopentenyl diphosphate biosynthesis via DXP pathway; isopentenyl diphosphate from 1-deoxy-D-xylulose 5-phosphate: step 3/6. Its function is as follows. Catalyzes the phosphorylation of the position 2 hydroxy group of 4-diphosphocytidyl-2C-methyl-D-erythritol. In Shewanella pealeana (strain ATCC 700345 / ANG-SQ1), this protein is 4-diphosphocytidyl-2-C-methyl-D-erythritol kinase.